Consider the following 480-residue polypeptide: MPKHTKKDPREGAPSATGEPQKQAAGRKLFGTDGVRGVANQPPMTPEMALRLGRAIAFVASHGKSRQVRVVIGKDTRLSGYMLETAIASGVCAMGGRVMLSGPIPTPAVAQLTQSMRADAGVVISASHNPYQDNGIKIFGPDGYKLPDTAEEEIERLMESHELDEARVVGAAIGSAVKLDDARGRYVVFCKNTFPTALSLDGVKIVVDAAHGAAYRVAPSVFTELGANVTALGVKPNGRNINRETGALHPEHVKAEVLKRGAAIGIALDGDADRVIMVDERGEVVDGDAIMALCALRMLRTGKLPRNTIVTTVMSNLGLERALKAQSGHVVRTAVGDRYVVEAMRNGGYSFGGEQSGHLIFLDHATTGDGIVAALQVLAIMMEEDKPLSELASKAMQRVPQVLENATFATRLPLDSMQRTRVTVDRIEKTLGDKGRILVRWSGTEPKLRVMVEGEDASTIGAYALEIIEAAKQDVAGASA.

Residues Met-1 to Gln-41 are disordered. Ser-127 functions as the Phosphoserine intermediate in the catalytic mechanism. Mg(2+) contacts are provided by Ser-127, Asp-269, Asp-271, and Asp-273. Ser-127 bears the Phosphoserine mark.

This sequence belongs to the phosphohexose mutase family. Mg(2+) is required as a cofactor. Activated by phosphorylation.

The enzyme catalyses alpha-D-glucosamine 1-phosphate = D-glucosamine 6-phosphate. Catalyzes the conversion of glucosamine-6-phosphate to glucosamine-1-phosphate. The polypeptide is Phosphoglucosamine mutase (Sorangium cellulosum (strain So ce56) (Polyangium cellulosum (strain So ce56))).